The chain runs to 153 residues: Prefoldin subunit alpha (153 aa).

The protein belongs to the prefoldin subunit alpha family. In terms of assembly, heterohexamer of two alpha and four beta subunits.

It is found in the cytoplasm. Molecular chaperone capable of stabilizing a range of proteins. Seems to fulfill an ATP-independent, HSP70-like function in archaeal de novo protein folding. This Methanothrix thermoacetophila (strain DSM 6194 / JCM 14653 / NBRC 101360 / PT) (Methanosaeta thermophila) protein is Prefoldin subunit alpha.